Consider the following 80-residue polypeptide: Small ribosomal subunit protein bS18 (80 aa).

Belongs to the bacterial ribosomal protein bS18 family. In terms of assembly, part of the 30S ribosomal subunit. Forms a tight heterodimer with protein bS6.

Functionally, binds as a heterodimer with protein bS6 to the central domain of the 16S rRNA, where it helps stabilize the platform of the 30S subunit. This Staphylococcus carnosus (strain TM300) protein is Small ribosomal subunit protein bS18.